Here is a 518-residue protein sequence, read N- to C-terminus: uncharacterized protein (518 aa).

It localises to the virion. This is an uncharacterized protein from Acanthamoeba polyphaga (Amoeba).